A 183-amino-acid chain; its full sequence is Maltose O-acetyltransferase (183 aa).

Asn-83 contributes to the acetyl-CoA binding site. His-113 (proton donor/acceptor) is an active-site residue. Acetyl-CoA contacts are provided by residues Gly-140, Ser-158, 163-164 (TK), Arg-178, and Lys-181.

It belongs to the transferase hexapeptide repeat family. Homodimer.

The catalysed reaction is D-maltose + acetyl-CoA = 1-O-acetylmaltose + CoA. In terms of biological role, catalyzes the CoA-dependent transfer of an acetyl group to maltose and other sugars. Acetylates glucose exclusively at the C6 position and maltose at the C6 position of the non-reducing end glucosyl moiety. Is able to acetylate maltooligosaccharides. This chain is Maltose O-acetyltransferase (maa), found in Escherichia coli (strain K12).